The primary structure comprises 527 residues: Probable feruloyl esterase B (527 aa).

The signal sequence occupies residues 1-19 (MALLRHLLPVLTVGSAVQS). Cystine bridges form between C31/C76 and C65/C115. N-linked (GlcNAc...) asparagine glycans are attached at residues N56, N86, and N139. 4 cysteine pairs are disulfide-bonded: C188/C442, C257/C274, C283/C292, and C504/C526. S189 serves as the catalytic Acyl-ester intermediate. Residues D258, D261, A263, D265, and I267 each coordinate Ca(2+). An N-linked (GlcNAc...) asparagine glycan is attached at N277. N312 and N356 each carry an N-linked (GlcNAc...) asparagine glycan. Active-site charge relay system residues include D401 and H441.

Belongs to the tannase family.

The protein localises to the secreted. The catalysed reaction is feruloyl-polysaccharide + H2O = ferulate + polysaccharide.. In terms of biological role, involved in degradation of plant cell walls. Hydrolyzes the feruloyl-arabinose ester bond in arabinoxylans as well as the feruloyl-galactose and feruloyl-arabinose ester bonds in pectin. The polypeptide is Probable feruloyl esterase B (faeB) (Emericella nidulans (strain FGSC A4 / ATCC 38163 / CBS 112.46 / NRRL 194 / M139) (Aspergillus nidulans)).